The following is a 159-amino-acid chain: Protein Smg homolog (159 aa).

This sequence belongs to the Smg family.

This Nitrosococcus oceani (strain ATCC 19707 / BCRC 17464 / JCM 30415 / NCIMB 11848 / C-107) protein is Protein Smg homolog.